Consider the following 206-residue polypeptide: Protein Ta0236 (206 aa).

An AMMECR1 domain is found at 16–205 (DIGTKAVRLA…EKDPEGVVEK (190 aa)).

The protein is Protein Ta0236 of Thermoplasma acidophilum (strain ATCC 25905 / DSM 1728 / JCM 9062 / NBRC 15155 / AMRC-C165).